Here is a 56-residue protein sequence, read N- to C-terminus: Preprotein translocase subunit SecG (56 aa).

Over 1 to 29 (MAKDKTTLPPTGAGLMRFFDEDTRAIKVS) the chain is Cytoplasmic. Residues 30 to 51 (PKGVIAIVLVLIAFEVFLHLFG) traverse the membrane as a helical segment. At 52-56 (PSIFG) the chain is on the extracellular side.

Belongs to the SEC61-beta family. In terms of assembly, component of the protein translocase complex. Heterotrimer consisting of alpha (SecY), beta (SecG) and gamma (SecE) subunits. Can form oligomers of the heterotrimer.

The protein resides in the cell membrane. Involved in protein export. The function of the beta subunit is unknown, but it may be involved in stabilization of the trimeric complex. The chain is Preprotein translocase subunit SecG from Thermococcus gammatolerans (strain DSM 15229 / JCM 11827 / EJ3).